Reading from the N-terminus, the 244-residue chain is RNA transcription, translation and transport factor protein (244 aa).

N6-acetyllysine occurs at positions 20, 62, and 98.

This sequence belongs to the RTRAF family. Homodimer. Interacts with FAM98A (via N- and C-terminus). Interacts with NIN; which may prevent phosphorylation of NIN. Interacts with POLR2A. Component of a tRNA-splicing ligase complex.

It localises to the nucleus. It is found in the cytoplasm. The protein localises to the cytosol. Its subcellular location is the perinuclear region. The protein resides in the cytoskeleton. It localises to the microtubule organizing center. It is found in the centrosome. Its function is as follows. RNA-binding protein involved in modulation of mRNA transcription by Polymerase II. Component of the tRNA-splicing ligase complex and is required for tRNA ligation. May be required for RNA transport. This is RNA transcription, translation and transport factor protein from Mus musculus (Mouse).